Reading from the N-terminus, the 111-residue chain is uncharacterized protein (111 aa).

The helical transmembrane segment at 48-70 threads the bilayer; sequence LFLVPFPASFTRWLTFLFHLVIY.

It is found in the membrane. This is an uncharacterized protein from Saccharomyces cerevisiae (strain ATCC 204508 / S288c) (Baker's yeast).